A 243-amino-acid polypeptide reads, in one-letter code: Small ribosomal subunit protein uS3 (243 aa).

The KH type-2 domain occupies 39 to 110; the sequence is IRTFIQKKYS…QVRINVVEVE (72 aa). The tract at residues 221–243 is disordered; the sequence is GAIPRRKGSRKPQQFEDRSNENS. Positions 233–243 are enriched in basic and acidic residues; it reads QQFEDRSNENS.

The protein belongs to the universal ribosomal protein uS3 family. As to quaternary structure, part of the 30S ribosomal subunit. Forms a tight complex with proteins S10 and S14.

Binds the lower part of the 30S subunit head. Binds mRNA in the 70S ribosome, positioning it for translation. The protein is Small ribosomal subunit protein uS3 of Prochlorococcus marinus subsp. pastoris (strain CCMP1986 / NIES-2087 / MED4).